The sequence spans 958 residues: MutS protein homolog 4 (958 aa).

Disordered regions lie at residues 51–110 (QEAA…SFGN) and 124–161 (PVGT…WTPQ). The segment covering 91-107 (SSSSSSSPAPASAPGSS) has biased composition (low complexity). Composition is skewed to polar residues over residues 124 to 138 (PVGT…TTYP) and 146 to 161 (SAGN…WTPQ). 702–709 (GPNMSGKS) lines the ATP pocket.

The protein belongs to the DNA mismatch repair MutS family. In terms of assembly, heterooligomer of MSH4 and MSH5. As to expression, predominantly expressed in testis.

It is found in the chromosome. Functionally, involved in meiotic recombination. Required for reciprocal recombination and proper segregation of homologous chromosomes at meiosis. The protein is MutS protein homolog 4 (Msh4) of Mus musculus (Mouse).